The chain runs to 329 residues: Lipoyl synthase (329 aa).

The tract at residues 1–23 (MTDLTATPAPAEPAASAYDPTAK) is disordered. Cysteine 76, cysteine 81, cysteine 87, cysteine 102, cysteine 106, cysteine 109, and serine 316 together coordinate [4Fe-4S] cluster. A Radical SAM core domain is found at 87-305 (CFGKGTATFM…EEEAYKMGFT (219 aa)).

This sequence belongs to the radical SAM superfamily. Lipoyl synthase family. Requires [4Fe-4S] cluster as cofactor.

It is found in the cytoplasm. It carries out the reaction [[Fe-S] cluster scaffold protein carrying a second [4Fe-4S](2+) cluster] + N(6)-octanoyl-L-lysyl-[protein] + 2 oxidized [2Fe-2S]-[ferredoxin] + 2 S-adenosyl-L-methionine + 4 H(+) = [[Fe-S] cluster scaffold protein] + N(6)-[(R)-dihydrolipoyl]-L-lysyl-[protein] + 4 Fe(3+) + 2 hydrogen sulfide + 2 5'-deoxyadenosine + 2 L-methionine + 2 reduced [2Fe-2S]-[ferredoxin]. It participates in protein modification; protein lipoylation via endogenous pathway; protein N(6)-(lipoyl)lysine from octanoyl-[acyl-carrier-protein]: step 2/2. Catalyzes the radical-mediated insertion of two sulfur atoms into the C-6 and C-8 positions of the octanoyl moiety bound to the lipoyl domains of lipoate-dependent enzymes, thereby converting the octanoylated domains into lipoylated derivatives. The chain is Lipoyl synthase from Burkholderia pseudomallei (strain 1106a).